Consider the following 124-residue polypeptide: Small ribosomal subunit protein uS12 (124 aa).

The segment at 1–24 (MPTINQLIKKPRKSQKEKTASPAL) is disordered. 3-methylthioaspartic acid is present on D89.

The protein belongs to the universal ribosomal protein uS12 family. In terms of assembly, part of the 30S ribosomal subunit. Contacts proteins S8 and S17. May interact with IF1 in the 30S initiation complex.

In terms of biological role, with S4 and S5 plays an important role in translational accuracy. Functionally, interacts with and stabilizes bases of the 16S rRNA that are involved in tRNA selection in the A site and with the mRNA backbone. Located at the interface of the 30S and 50S subunits, it traverses the body of the 30S subunit contacting proteins on the other side and probably holding the rRNA structure together. The combined cluster of proteins S8, S12 and S17 appears to hold together the shoulder and platform of the 30S subunit. The protein is Small ribosomal subunit protein uS12 of Borrelia hermsii (strain HS1 / DAH).